A 342-amino-acid chain; its full sequence is Nucleoid-associated protein Shewana3_2426 (342 aa).

Belongs to the YejK family.

Its subcellular location is the cytoplasm. The protein resides in the nucleoid. The chain is Nucleoid-associated protein Shewana3_2426 from Shewanella sp. (strain ANA-3).